The following is a 375-amino-acid chain: POU domain, class 3, transcription factor 1 (375 aa).

Disordered regions lie at residues 1–29 (MAATAQYLPRNNSLPSNPLMHPDSDRMHQ), 56–139 (MSLT…QPLI), and 151–200 (MLGP…PSSD). Polar residues-rich tracts occupy residues 107 to 117 (VHQQTPSSHAW), 130 to 139 (PGSNSHQPLI), and 151 to 160 (MLGPQASSLH). Residues 162–171 (SMRDPLHDDP) are compositionally biased toward basic and acidic residues. Residues 194-268 (EDAPSSDDLE…LLNKWLEETD (75 aa)) enclose the POU-specific domain. A DNA-binding region (homeobox) is located at residues 286–345 (KRKKRTSIEVGVKGALENHFLKCPKPSAHEITSLADSLQLEKEVVRVWFCNRRQKEKRMT).

Belongs to the POU transcription factor family. Class-3 subfamily.

It localises to the nucleus. In terms of biological role, acts as a transcription factor. May play a role in neuronal differentiation. This is POU domain, class 3, transcription factor 1 from Xenopus tropicalis (Western clawed frog).